A 101-amino-acid polypeptide reads, in one-letter code: Small ribosomal subunit protein uS14 (101 aa).

It belongs to the universal ribosomal protein uS14 family. As to quaternary structure, part of the 30S ribosomal subunit. Contacts proteins S3 and S10.

Its function is as follows. Binds 16S rRNA, required for the assembly of 30S particles and may also be responsible for determining the conformation of the 16S rRNA at the A site. In Vibrio campbellii (strain ATCC BAA-1116), this protein is Small ribosomal subunit protein uS14.